The sequence spans 204 residues: Holliday junction branch migration complex subunit RuvA (204 aa).

The interval M1–S64 is domain I. The segment at Q65–E143 is domain II. The flexible linker stretch occupies residues S144 to N155. The segment at E156–L204 is domain III.

The protein belongs to the RuvA family. In terms of assembly, homotetramer. Forms an RuvA(8)-RuvB(12)-Holliday junction (HJ) complex. HJ DNA is sandwiched between 2 RuvA tetramers; dsDNA enters through RuvA and exits via RuvB. An RuvB hexamer assembles on each DNA strand where it exits the tetramer. Each RuvB hexamer is contacted by two RuvA subunits (via domain III) on 2 adjacent RuvB subunits; this complex drives branch migration. In the full resolvosome a probable DNA-RuvA(4)-RuvB(12)-RuvC(2) complex forms which resolves the HJ.

It localises to the cytoplasm. The RuvA-RuvB-RuvC complex processes Holliday junction (HJ) DNA during genetic recombination and DNA repair, while the RuvA-RuvB complex plays an important role in the rescue of blocked DNA replication forks via replication fork reversal (RFR). RuvA specifically binds to HJ cruciform DNA, conferring on it an open structure. The RuvB hexamer acts as an ATP-dependent pump, pulling dsDNA into and through the RuvAB complex. HJ branch migration allows RuvC to scan DNA until it finds its consensus sequence, where it cleaves and resolves the cruciform DNA. This chain is Holliday junction branch migration complex subunit RuvA, found in Pasteurella multocida (strain Pm70).